A 383-amino-acid polypeptide reads, in one-letter code: Envelope glycoprotein D (383 aa).

An N-terminal signal peptide occupies residues 1–30; sequence MPAATMATPGYLACRTSVATLLFFVLLRRA. The Virion surface portion of the chain corresponds to 31–358; it reads AILGAGGAPS…PKVVGPTVGP (328 aa). Intrachain disulfides connect cysteine 76–cysteine 197, cysteine 115–cysteine 212, and cysteine 127–cysteine 136. Positions 244 to 311 are profusion; that stretch reads YQDKLKVASP…TSASGVIEIE (68 aa). Positions 315–349 are disordered; the sequence is ESDVRLVSYPPPTLPSPGPGGNENGAGYSDNRPDP. Over residues 323 to 332 the composition is skewed to pro residues; the sequence is YPPPTLPSPG. The helical transmembrane segment at 359-379 threads the bilayer; it reads GAIILVVMCAPILIGLTAFTI. At 380–383 the chain is on the intravirion side; the sequence is RKYC.

This sequence belongs to the herpesviridae glycoprotein D family.

Its subcellular location is the virion membrane. Functionally, envelope glycoprotein that binds to host cell entry receptors, promoting the virus entry into host cells. May trigger fusion with host membrane, by recruiting the fusion machinery composed of gB and gH/gL. This chain is Envelope glycoprotein D (US6), found in Amazona oratrix (yellow-headed parrot).